Consider the following 389-residue polypeptide: Chaperone protein DnaJ (389 aa).

The J domain maps to 5–79; it reads KRDYYEVLGI…RKLYDQFGHE (75 aa). A CR-type zinc finger spans residues 151 to 234; sequence GCNKTIKYER…CRSNKYTVTN (84 aa). Positions 164, 167, 182, 185, 208, 211, 222, and 225 each coordinate Zn(2+). CXXCXGXG motif repeat units follow at residues 164–171, 182–189, 208–215, and 222–229; these read CHSCNGFG, CKDCNGNG, CSTCNGQG, and CKTCRSNK.

The protein belongs to the DnaJ family. As to quaternary structure, homodimer. Requires Zn(2+) as cofactor.

The protein resides in the cytoplasm. Its function is as follows. Participates actively in the response to hyperosmotic and heat shock by preventing the aggregation of stress-denatured proteins and by disaggregating proteins, also in an autonomous, DnaK-independent fashion. Unfolded proteins bind initially to DnaJ; upon interaction with the DnaJ-bound protein, DnaK hydrolyzes its bound ATP, resulting in the formation of a stable complex. GrpE releases ADP from DnaK; ATP binding to DnaK triggers the release of the substrate protein, thus completing the reaction cycle. Several rounds of ATP-dependent interactions between DnaJ, DnaK and GrpE are required for fully efficient folding. Also involved, together with DnaK and GrpE, in the DNA replication of plasmids through activation of initiation proteins. In Mycoplasma genitalium (strain ATCC 33530 / DSM 19775 / NCTC 10195 / G37) (Mycoplasmoides genitalium), this protein is Chaperone protein DnaJ.